A 342-amino-acid polypeptide reads, in one-letter code: MSQLSNPSQAFLRQRGQLSGRILLCSPPADAIAAELRQTGVEVSVLSWDHTAVNACRGAVAEEWLFTDLALPADAQWDQIALFMPKARELLDLMLSVVAPALKHAQHIWLVGEKREGVESAAKRLAKEDWDATKVDSARHCQVWSLTPPADWKPKQNDFWRAYELAQEKVDTLQLFTLPGVFSAGRLDEGTEVLLQSLPELHGRRLLDFGCGCGVIGATLKKRYPKASVELTDINLLALKSAARTAEANGVELNVYASDGLAEVQPGVDAIITNPPFHQGVKQDTRVTQQFLRDCARVLKPGGSLTLVANRFLPYPDWIEAHVGPVRVLFENSRFKVYHAVR.

This sequence belongs to the methyltransferase superfamily. RsmC family. In terms of assembly, monomer.

It is found in the cytoplasm. It catalyses the reaction guanosine(1207) in 16S rRNA + S-adenosyl-L-methionine = N(2)-methylguanosine(1207) in 16S rRNA + S-adenosyl-L-homocysteine + H(+). Specifically methylates the guanine in position 1207 of 16S rRNA in the 30S particle. This is Ribosomal RNA small subunit methyltransferase C from Hahella chejuensis (strain KCTC 2396).